The sequence spans 57 residues: Large ribosomal subunit protein bL33 (57 aa).

It belongs to the bacterial ribosomal protein bL33 family.

The sequence is that of Large ribosomal subunit protein bL33 from Akkermansia muciniphila (strain ATCC BAA-835 / DSM 22959 / JCM 33894 / BCRC 81048 / CCUG 64013 / CIP 107961 / Muc).